Reading from the N-terminus, the 101-residue chain is Small ribosomal subunit protein bS18c (101 aa).

Positions 1 to 19 (MNKSKRPFTKSKRSFRRRL) are enriched in basic residues. The segment at 1-23 (MNKSKRPFTKSKRSFRRRLPPIQ) is disordered.

This sequence belongs to the bacterial ribosomal protein bS18 family. In terms of assembly, part of the 30S ribosomal subunit.

Its subcellular location is the plastid. It is found in the chloroplast. The sequence is that of Small ribosomal subunit protein bS18c from Draba nemorosa (Woodland whitlowgrass).